The sequence spans 542 residues: Trans-alpha-bergamotene synthase (542 aa).

Mg(2+) is bound by residues aspartate 295, aspartate 299, aspartate 439, threonine 443, and glutamate 447. Positions 295–299 (DDFYD) match the DDXXD motif motif.

It belongs to the terpene synthase family. Mg(2+) is required as a cofactor.

The catalysed reaction is (2E,6E)-farnesyl diphosphate = (1S,5S,6R)-alpha-bergamotene + diphosphate. It participates in secondary metabolite biosynthesis; terpenoid biosynthesis. Functionally, sesquiterpene synthase converting farnesyl diphosphate to trans-alpha-bergamotene as the major product. This Phyla dulcis (Aztec sweet herb) protein is Trans-alpha-bergamotene synthase.